The primary structure comprises 234 residues: Lactate utilization protein C 1 (234 aa).

The protein belongs to the LutC/YkgG family.

Its function is as follows. Is involved in L-lactate degradation and allows cells to grow with lactate as the sole carbon source. The chain is Lactate utilization protein C 1 from Bacillus mycoides (strain KBAB4) (Bacillus weihenstephanensis).